Reading from the N-terminus, the 331-residue chain is CRISPR-associated endonuclease Cas1 (331 aa).

Mn(2+) contacts are provided by Glu166, His228, and Asp243.

It belongs to the CRISPR-associated endonuclease Cas1 family. As to quaternary structure, homodimer, forms a heterotetramer with a Cas2 homodimer. The cofactor is Mg(2+). Mn(2+) is required as a cofactor.

In terms of biological role, CRISPR (clustered regularly interspaced short palindromic repeat), is an adaptive immune system that provides protection against mobile genetic elements (viruses, transposable elements and conjugative plasmids). CRISPR clusters contain spacers, sequences complementary to antecedent mobile elements, and target invading nucleic acids. CRISPR clusters are transcribed and processed into CRISPR RNA (crRNA). Acts as a dsDNA endonuclease. Involved in the integration of spacer DNA into the CRISPR cassette. In Hyperthermus butylicus (strain DSM 5456 / JCM 9403 / PLM1-5), this protein is CRISPR-associated endonuclease Cas1.